Consider the following 464-residue polypeptide: Clusterin-like protein 1 (464 aa).

A signal peptide spans 1–20; that stretch reads MQPPLFVISVYLLWLKYCDS. Positions 56 to 109 form a coiled coil; the sequence is IKQMKIMMERREEEHAKLMKALKKCKEEKQEAQKLMNEVQERLEEEEKLCQASS. 5 disulfide bridges follow: Cys-105-Cys-331, Cys-116-Cys-323, Cys-119-Cys-320, Cys-124-Cys-313, and Cys-131-Cys-303. Asn-195, Asn-255, Asn-309, Asn-349, Asn-398, and Asn-429 each carry an N-linked (GlcNAc...) asparagine glycan.

Belongs to the clusterin family.

It localises to the secreted. In Rattus norvegicus (Rat), this protein is Clusterin-like protein 1.